A 682-amino-acid polypeptide reads, in one-letter code: Cyclic nucleotide-gated cation channel (682 aa).

The segment at 1 to 41 (MTGQAALERSVSSHRLSVRSRLEGEAERAESAISRTDGDDD) is disordered. The Cytoplasmic portion of the chain corresponds to 1-136 (MTGQAALERS…EGFVVSQSDD (136 aa)). Residues 20–30 (SRLEGEAERAE) are compositionally biased toward basic and acidic residues. Residues 137-157 (IYYYWLFFIALASLYNWIMLV) form a helical membrane-spanning segment. The Extracellular portion of the chain corresponds to 158 to 169 (ARACFDQLQDEN). Residues 170-190 (FFLWVGLDYLCDVIYILDTCI) traverse the membrane as a helical segment. Topologically, residues 191–218 (RLRTGYLEQGLLVKDLAKLRDNYIRTLQ) are cytoplasmic. Residues 219 to 239 (FKLDFLSILPTELLFFVTGYV) traverse the membrane as a helical segment. Residues 240-272 (PQLRFNRLLRFSRMFEFFDRTETRTNYPNAFRI) are Extracellular-facing. The chain crosses the membrane as a helical span at residues 273–293 (CNLILYILVIIHWNACIYYAI). Residues 294–311 (SKALGLSSDTWVYSGQNK) are Cytoplasmic-facing. Residues 312 to 332 (TLSFCYVYCFYWSTLTLTTIG) traverse the membrane as a helical segment. The Extracellular segment spans residues 333–343 (EMPPPVKDEEY). The helical transmembrane segment at 344–364 (VFVVFDFLVGVLIFATIVGNV) threads the bilayer. The Cytoplasmic portion of the chain corresponds to 365-682 (GSMIANMNAT…SAETNSEEET (318 aa)). Residues 455-577 (LLVE…QGLL), E514, and R529 contribute to the 3',5'-cyclic AMP site. Positions 649-682 (GEHAGVPTHTHADIHAQPETHTRTSAETNSEEET) are disordered. A compositionally biased stretch (basic and acidic residues) spans 658–672 (THADIHAQPETHTRT).

This sequence belongs to the cyclic nucleotide-gated cation channel (TC 1.A.1.5) family. As to expression, olfactory neurons.

The protein localises to the membrane. This cyclic nucleotide-gated channel is activated equally well by both cAMP and cGMP. This Ictalurus punctatus (Channel catfish) protein is Cyclic nucleotide-gated cation channel.